The chain runs to 335 residues: Large ribosomal subunit protein uL10 (335 aa).

Residues Val-306–Gly-335 are disordered. The span at Glu-308 to Ala-326 shows a compositional bias: acidic residues.

The protein belongs to the universal ribosomal protein uL10 family. Part of the 50S ribosomal subunit. Forms part of the ribosomal stalk which helps the ribosome interact with GTP-bound translation factors. Forms a heptameric L10(L12)2(L12)2(L12)2 complex, where L10 forms an elongated spine to which the L12 dimers bind in a sequential fashion.

Functionally, forms part of the ribosomal stalk, playing a central role in the interaction of the ribosome with GTP-bound translation factors. The chain is Large ribosomal subunit protein uL10 from Methanobrevibacter smithii (strain ATCC 35061 / DSM 861 / OCM 144 / PS).